A 1538-amino-acid chain; its full sequence is Phenolphthiocerol/phthiocerol polyketide synthase subunit B (1538 aa).

The Ketosynthase family 3 (KS3) domain occupies 33–455 (AEPVAVVGIG…GTNAHVIIEQ (423 aa)). Catalysis depends on for beta-ketoacyl synthase activity residues cysteine 205, histidine 340, and histidine 377. Positions 553 to 882 (DGSPGPGTVF…TNLYTADIAH (330 aa)) are acyltransferase. The active-site For malonyltransferase activity is serine 649. Residue 1153–1196 (SQLVIGATGNIGPHLIRQLARMGAKTIVAMARKPGALDELTQCL) participates in NADP(+) binding. The interval 1153-1328 (SQLVIGATGN…TVVDWGLWKS (176 aa)) is beta-ketoacyl reductase. In terms of domain architecture, Carrier spans 1423-1498 (DMLFDHVGAL…SLTDYLATVL (76 aa)). Serine 1458 is modified (O-(pantetheine 4'-phosphoryl)serine).

NADP(+) serves as cofactor. It depends on pantetheine 4'-phosphate as a cofactor.

The catalysed reaction is icosanoyl-[(phenol)carboxyphthiodiolenone synthase] + 2 (S)-methylmalonyl-CoA + 3 malonyl-CoA + 5 NADPH + 10 H(+) = C32-carboxyphthiodiolenone-[(phenol)carboxyphthiodiolenone synthase] + 5 CO2 + 5 NADP(+) + 5 CoA + 2 H2O. It carries out the reaction docosanoyl-[(phenol)carboxyphthiodiolenone synthase] + 2 (S)-methylmalonyl-CoA + 3 malonyl-CoA + 5 NADPH + 10 H(+) = C34-carboxyphthiodiolenone-[(phenol)carboxyphthiodiolenone synthase] + 5 CO2 + 5 NADP(+) + 5 CoA + 2 H2O. It catalyses the reaction 17-(4-hydroxyphenyl)heptadecanoyl-[(phenol)carboxyphthiodiolenone synthase] + 2 (S)-methylmalonyl-CoA + 3 malonyl-CoA + 5 NADPH + 10 H(+) = C35-(phenol)carboxyphthiodiolenone-[(phenol)carboxyphthiodiolenone synthase] + 5 CO2 + 5 NADP(+) + 5 CoA + 2 H2O. The enzyme catalyses 19-(4-hydroxyphenyl)nonadecanoyl-[(phenol)carboxyphthiodiolenone synthase] + 2 (S)-methylmalonyl-CoA + 3 malonyl-CoA + 5 NADPH + 10 H(+) = C37-(phenol)carboxyphthiodiolenone-[(phenol)carboxyphthiodiolenone synthase] + 5 CO2 + 5 NADP(+) + 5 CoA + 2 H2O. It participates in lipid metabolism; fatty acid biosynthesis. Part of the PpsABCDE complex involved in the biosynthesis of the lipid core common to phthiocerols and phenolphthiocerols by successive additions of malonyl-CoA or methylmalonyl-CoA extender units. PpsA can accept as substrate the activated forms of either icosanoyl (C20), docosanoyl (C22) or lignoceroyl (C24) groups from FadD26, or a (4-hydroxyphenyl)-C17 or (4-hydroxyphenyl)-C19 fatty acyl from FadD29. PpsA initiates the biosynthesis and extends its substrate using a malonyl-CoA extender unit. The PpsB and PpsC proteins add the second and third malonyl-CoA extender units. PpsD adds an (R)-methylmalonyl unit and PpsE adds a second (R)-methylmalonyl unit. The incorporation of the methylmalonyl units results in formation of two branched methyl groups in the elongated product. The protein is Phenolphthiocerol/phthiocerol polyketide synthase subunit B (ppsB) of Mycobacterium tuberculosis (strain CDC 1551 / Oshkosh).